We begin with the raw amino-acid sequence, 421 residues long: 3-isopropylmalate dehydratase large subunit (421 aa).

[4Fe-4S] cluster is bound by residues Cys301, Cys361, and Cys364.

It belongs to the aconitase/IPM isomerase family. LeuC type 2 subfamily. In terms of assembly, heterodimer of LeuC and LeuD. It depends on [4Fe-4S] cluster as a cofactor.

It carries out the reaction (2R,3S)-3-isopropylmalate = (2S)-2-isopropylmalate. It functions in the pathway amino-acid biosynthesis; L-leucine biosynthesis; L-leucine from 3-methyl-2-oxobutanoate: step 2/4. Functionally, catalyzes the isomerization between 2-isopropylmalate and 3-isopropylmalate, via the formation of 2-isopropylmaleate. The protein is 3-isopropylmalate dehydratase large subunit of Desulfitobacterium hafniense (strain Y51).